The primary structure comprises 1923 residues: Nuclear pore complex protein GP210 (1923 aa).

The signal sequence occupies residues 1–22; it reads MVPVSFCFFFLLLLLSAGESSS. Asn-73, Asn-117, Asn-289, Asn-609, Asn-863, Asn-903, Asn-967, Asn-982, Asn-1171, Asn-1199, Asn-1550, Asn-1568, and Asn-1743 each carry an N-linked (GlcNAc...) asparagine glycan. Positions 1152–1205 constitute a BIG2 domain; it reads IFLVPGASYVLTIEGGPTMNVSVDYTTVDNEVAKIEKSGRLYATSPGNTTIYAT. The helical transmembrane segment at 1829–1849 threads the bilayer; that stretch reads SVLLKILWGVLVLVVSVIILM.

The protein belongs to the NUP210 family. Part of the nuclear pore complex (NPC). The NPC has an eight-fold symmetrical structure comprising a central transport channel and two rings, the cytoplasmic and nuclear rings, to which eight filaments are attached. The cytoplasmic filaments have loose ends, while the nuclear filaments are joined in a distal ring, forming a nuclear basket. NPCs are highly dynamic in configuration and composition, and can be devided in 3 subcomplexes, the NUP62 subcomplex, the NUP107-160 subcomplex and the NUP93 subcomplex, containing approximately 30 different nucleoporin proteins.

Its subcellular location is the nucleus envelope. The protein resides in the nucleus membrane. It is found in the nucleus. The protein localises to the nuclear pore complex. This is Nuclear pore complex protein GP210 from Arabidopsis thaliana (Mouse-ear cress).